Reading from the N-terminus, the 477-residue chain is Proline--tRNA ligase (477 aa).

Belongs to the class-II aminoacyl-tRNA synthetase family. ProS type 3 subfamily. As to quaternary structure, homodimer.

Its subcellular location is the cytoplasm. It carries out the reaction tRNA(Pro) + L-proline + ATP = L-prolyl-tRNA(Pro) + AMP + diphosphate. In terms of biological role, catalyzes the attachment of proline to tRNA(Pro) in a two-step reaction: proline is first activated by ATP to form Pro-AMP and then transferred to the acceptor end of tRNA(Pro). The protein is Proline--tRNA ligase of Methanoculleus marisnigri (strain ATCC 35101 / DSM 1498 / JR1).